A 634-amino-acid polypeptide reads, in one-letter code: Alpha-L-iduronidase (634 aa).

The N-terminal stretch at 1-16 (MLTFFAAFLAAPLALA) is a signal peptide. Alpha-D-mannopyranose contacts are provided by Pro44, Leu46, and His48. Alpha-L-iduronate is bound at residue His81. N-linked (GlcNAc...) asparagine glycosylation is present at Asn100. Residues Asn171 and Glu172 each coordinate alpha-L-iduronate. The Proton donor role is filled by Glu172. N-linked (GlcNAc...) asparagine glycans are attached at residues Asn180 and Asn233. Alpha-L-iduronate is bound by residues Lys254, Glu289, and Gly295. The Nucleophile role is filled by Glu289. Trp296 is a binding site for alpha-D-mannopyranose. The N-linked (GlcNAc...) asparagine glycan is linked to Asn326. Residues Asp339 and Arg353 each contribute to the alpha-L-iduronate site. Residues Asn362, Asn405, and Asn441 are each glycosylated (N-linked (GlcNAc...) asparagine). Cys531 and Cys567 are oxidised to a cystine.

This sequence belongs to the glycosyl hydrolase 39 family. As to quaternary structure, monomer. In terms of processing, N-glycosylation contributes to substrate binding and is required for full enzymatic activity. As to expression, ubiquitous.

It is found in the lysosome. The catalysed reaction is Hydrolysis of unsulfated alpha-L-iduronosidic linkages in dermatan sulfate.. The chain is Alpha-L-iduronidase (Idua) from Mus musculus (Mouse).